Reading from the N-terminus, the 260-residue chain is Pectate lyase H (260 aa).

The signal sequence occupies residues 1 to 17 (MFIKNGLLLSLATSVLA).

Belongs to the polysaccharide lyase 3 family. The cofactor is Ca(2+).

The protein localises to the secreted. The catalysed reaction is Eliminative cleavage of (1-&gt;4)-alpha-D-galacturonan to give oligosaccharides with 4-deoxy-alpha-D-galact-4-enuronosyl groups at their non-reducing ends.. Its function is as follows. Pectinolytic enzyme consist of four classes of enzymes: pectin lyase, polygalacturonase, pectin methylesterase and rhamnogalacturonase. Among pectinolytic enzymes, pectin lyase is the most important in depolymerization of pectin, since it cleaves internal glycosidic bonds of highly methylated pectins. Favors pectate, the anion, over pectin, the methyl ester. The sequence is that of Pectate lyase H (plyH) from Emericella nidulans (strain FGSC A4 / ATCC 38163 / CBS 112.46 / NRRL 194 / M139) (Aspergillus nidulans).